The chain runs to 193 residues: dTTP/UTP pyrophosphatase (193 aa).

The Proton acceptor role is filled by Asp77.

The protein belongs to the Maf family. YhdE subfamily. Requires a divalent metal cation as cofactor.

It is found in the cytoplasm. It carries out the reaction dTTP + H2O = dTMP + diphosphate + H(+). The catalysed reaction is UTP + H2O = UMP + diphosphate + H(+). Functionally, nucleoside triphosphate pyrophosphatase that hydrolyzes dTTP and UTP. May have a dual role in cell division arrest and in preventing the incorporation of modified nucleotides into cellular nucleic acids. The chain is dTTP/UTP pyrophosphatase from Bacteroides fragilis (strain ATCC 25285 / DSM 2151 / CCUG 4856 / JCM 11019 / LMG 10263 / NCTC 9343 / Onslow / VPI 2553 / EN-2).